The sequence spans 141 residues: Hemoglobin subunit alpha-A (141 aa).

Positions 1–141 constitute a Globin domain; sequence VLSAADKTNV…VGAVLTAKYR (141 aa). An O2-binding site is contributed by His-58. His-87 serves as a coordination point for heme b.

It belongs to the globin family. Heterotetramer of two alpha chains and two beta chains. Red blood cells.

Functionally, involved in oxygen transport from the lung to the various peripheral tissues. This Cygnus olor (Mute swan) protein is Hemoglobin subunit alpha-A (HBAA).